The sequence spans 487 residues: Glutamyl-tRNA(Gln) amidotransferase subunit A (487 aa).

Catalysis depends on charge relay system residues Lys-79 and Ser-154. Catalysis depends on Ser-178, which acts as the Acyl-ester intermediate.

This sequence belongs to the amidase family. GatA subfamily. Heterotrimer of A, B and C subunits.

It carries out the reaction L-glutamyl-tRNA(Gln) + L-glutamine + ATP + H2O = L-glutaminyl-tRNA(Gln) + L-glutamate + ADP + phosphate + H(+). Allows the formation of correctly charged Gln-tRNA(Gln) through the transamidation of misacylated Glu-tRNA(Gln) in organisms which lack glutaminyl-tRNA synthetase. The reaction takes place in the presence of glutamine and ATP through an activated gamma-phospho-Glu-tRNA(Gln). The protein is Glutamyl-tRNA(Gln) amidotransferase subunit A of Heliobacterium modesticaldum (strain ATCC 51547 / Ice1).